We begin with the raw amino-acid sequence, 197 residues long: MFDYIKGQLTKITAKYIVVEANGLGYIIYVANPYSFSDSVNQTLTIYLHQVIREDAHLLFGFHTENEKDVFLKLISVSGIGPMTALAIVAVDDNEGLVAAIDNSDIKYLMKFPKIGKKTAQQMILDLSGKFVTIPEGGQAQQMPKAKGNQQLDEAIEALLALGYKATELKKIRAFFEGTDDTAEQYIKSALKMLMKG.

Residues 1–63 are domain I; that stretch reads MFDYIKGQLT…EDAHLLFGFH (63 aa). Residues 64-142 form a domain II region; that stretch reads TENEKDVFLK…TIPEGGQAQQ (79 aa). The interval 142–146 is flexible linker; the sequence is QMPKA. The interval 147-197 is domain III; the sequence is KGNQQLDEAIEALLALGYKATELKKIRAFFEGTDDTAEQYIKSALKMLMKG.

This sequence belongs to the RuvA family. In terms of assembly, homotetramer. Forms an RuvA(8)-RuvB(12)-Holliday junction (HJ) complex. HJ DNA is sandwiched between 2 RuvA tetramers; dsDNA enters through RuvA and exits via RuvB. An RuvB hexamer assembles on each DNA strand where it exits the tetramer. Each RuvB hexamer is contacted by two RuvA subunits (via domain III) on 2 adjacent RuvB subunits; this complex drives branch migration. In the full resolvosome a probable DNA-RuvA(4)-RuvB(12)-RuvC(2) complex forms which resolves the HJ.

It localises to the cytoplasm. The RuvA-RuvB-RuvC complex processes Holliday junction (HJ) DNA during genetic recombination and DNA repair, while the RuvA-RuvB complex plays an important role in the rescue of blocked DNA replication forks via replication fork reversal (RFR). RuvA specifically binds to HJ cruciform DNA, conferring on it an open structure. The RuvB hexamer acts as an ATP-dependent pump, pulling dsDNA into and through the RuvAB complex. HJ branch migration allows RuvC to scan DNA until it finds its consensus sequence, where it cleaves and resolves the cruciform DNA. The chain is Holliday junction branch migration complex subunit RuvA from Streptococcus uberis (strain ATCC BAA-854 / 0140J).